The chain runs to 143 residues: MSKAASQYATLEDLPSKPKRPQTGFFIYKSEVFAKRRTECPTLKVPEIVSKISEEYKALPEKEKQKYEEAYRKEKATYDKQNDQWKEKYGDIEKSLKDQAKKALKEKTKKSKAAEKELEKSKKKAPAAAPAKKDDKKAPAKKK.

The disordered stretch occupies residues 1–22 (MSKAASQYATLEDLPSKPKRPQ). Positions 18 to 86 (PKRPQTGFFI…TYDKQNDQWK (69 aa)) form a DNA-binding region, HMG box. Ala-70 is subject to Blocked amino end (Ala). Basic and acidic residues-rich tracts occupy residues 100–120 (AKKALKEKTKKSKAAEKELEK) and 131–143 (AKKDDKKAPAKKK). Residues 100–143 (AKKALKEKTKKSKAAEKELEKSKKKAPAAAPAKKDDKKAPAKKK) are disordered.

The protein resides in the nucleus. It localises to the chromosome. The chain is High mobility group protein B from Tetrahymena thermophila.